Reading from the N-terminus, the 501-residue chain is Lysine--tRNA ligase (501 aa).

Glu-411 and Glu-418 together coordinate Mg(2+).

This sequence belongs to the class-II aminoacyl-tRNA synthetase family. Homodimer. Mg(2+) is required as a cofactor.

It is found in the cytoplasm. The enzyme catalyses tRNA(Lys) + L-lysine + ATP = L-lysyl-tRNA(Lys) + AMP + diphosphate. The chain is Lysine--tRNA ligase from Pseudomonas aeruginosa (strain LESB58).